The sequence spans 312 residues: Acetylglutamate kinase (312 aa).

Substrate is bound by residues 77-78, Arg99, and Asn192; that span reads GG.

The protein belongs to the acetylglutamate kinase family. ArgB subfamily.

Its subcellular location is the cytoplasm. It carries out the reaction N-acetyl-L-glutamate + ATP = N-acetyl-L-glutamyl 5-phosphate + ADP. The protein operates within amino-acid biosynthesis; L-arginine biosynthesis; N(2)-acetyl-L-ornithine from L-glutamate: step 2/4. Functionally, catalyzes the ATP-dependent phosphorylation of N-acetyl-L-glutamate. This Synechococcus sp. (strain JA-2-3B'a(2-13)) (Cyanobacteria bacterium Yellowstone B-Prime) protein is Acetylglutamate kinase.